The chain runs to 141 residues: Large ribosomal subunit protein uL11 (141 aa).

The protein belongs to the universal ribosomal protein uL11 family. Part of the ribosomal stalk of the 50S ribosomal subunit. Interacts with L10 and the large rRNA to form the base of the stalk. L10 forms an elongated spine to which L12 dimers bind in a sequential fashion forming a multimeric L10(L12)X complex. In terms of processing, one or more lysine residues are methylated.

Forms part of the ribosomal stalk which helps the ribosome interact with GTP-bound translation factors. In Nautilia profundicola (strain ATCC BAA-1463 / DSM 18972 / AmH), this protein is Large ribosomal subunit protein uL11.